A 500-amino-acid chain; its full sequence is Probable cytosol aminopeptidase (500 aa).

Residues K264 and D269 each contribute to the Mn(2+) site. K276 is a catalytic residue. D287, D346, and E348 together coordinate Mn(2+). The active site involves R350.

The protein belongs to the peptidase M17 family. Mn(2+) serves as cofactor.

The protein localises to the cytoplasm. It catalyses the reaction Release of an N-terminal amino acid, Xaa-|-Yaa-, in which Xaa is preferably Leu, but may be other amino acids including Pro although not Arg or Lys, and Yaa may be Pro. Amino acid amides and methyl esters are also readily hydrolyzed, but rates on arylamides are exceedingly low.. The enzyme catalyses Release of an N-terminal amino acid, preferentially leucine, but not glutamic or aspartic acids.. In terms of biological role, presumably involved in the processing and regular turnover of intracellular proteins. Catalyzes the removal of unsubstituted N-terminal amino acids from various peptides. This Rhodopseudomonas palustris (strain ATCC BAA-98 / CGA009) protein is Probable cytosol aminopeptidase.